The chain runs to 154 residues: Transcriptional repressor NrdR (154 aa).

Residues 3 to 34 (CPFCGHSNTQVLDTRMSEDGDAVRRRRRCEAC) fold into a zinc finger. Residues 49–139 (PAIVKKNGSR…VYRSFEDVAE (91 aa)) enclose the ATP-cone domain.

Belongs to the NrdR family. Requires Zn(2+) as cofactor.

Its function is as follows. Negatively regulates transcription of bacterial ribonucleotide reductase nrd genes and operons by binding to NrdR-boxes. In Cupriavidus pinatubonensis (strain JMP 134 / LMG 1197) (Cupriavidus necator (strain JMP 134)), this protein is Transcriptional repressor NrdR.